We begin with the raw amino-acid sequence, 273 residues long: Putative methyltransferase Cher3 (273 aa).

The 273-residue stretch at 1–273 (MTSERNTDIE…VKPQRIFRKS (273 aa)) folds into the CheR-type methyltransferase domain. S-adenosyl-L-methionine is bound by residues Ser-76, Arg-80, Glu-114, Asp-137, 199–200 (SL), and 215–216 (RN).

The chain is Putative methyltransferase Cher3 (cheR3) from Pseudomonas putida (strain ATCC 47054 / DSM 6125 / CFBP 8728 / NCIMB 11950 / KT2440).